The sequence spans 95 residues: Small ribosomal subunit protein bS6 (95 aa).

The protein belongs to the bacterial ribosomal protein bS6 family. Part of the 30S ribosomal subunit.

Functionally, binds together with bS18 to 16S ribosomal RNA. The protein is Small ribosomal subunit protein bS6 (rpsF) of Bacillus subtilis (strain 168).